We begin with the raw amino-acid sequence, 229 residues long: Protein-lysine N-methyltransferase EFM4 (229 aa).

The protein belongs to the class I-like SAM-binding methyltransferase superfamily. EFM4 family.

The protein resides in the cytoplasm. The catalysed reaction is L-lysyl-[protein] + S-adenosyl-L-methionine = N(6)-methyl-L-lysyl-[protein] + S-adenosyl-L-homocysteine + H(+). It carries out the reaction N(6)-methyl-L-lysyl-[protein] + S-adenosyl-L-methionine = N(6),N(6)-dimethyl-L-lysyl-[protein] + S-adenosyl-L-homocysteine + H(+). S-adenosyl-L-methionine-dependent protein-lysine N-methyltransferase that mono- and dimethylates elongation factor 1-alpha (TEF1 and TEF2) at 'Lys-316'. May play a role in intracellular transport. The chain is Protein-lysine N-methyltransferase EFM4 from Saccharomyces cerevisiae (strain ATCC 204508 / S288c) (Baker's yeast).